The following is a 950-amino-acid chain: Protocadherin alpha-13 (950 aa).

The N-terminal stretch at 1–29 (MLSSWQGGPRPRQLLLWLLILAAWETGSG) is a signal peptide. Over 30 to 697 (QLHYSVPEEA…GPEAALVDVN (668 aa)) the chain is Extracellular. Cadherin domains lie at 34-133 (SVPE…PPIF), 134-242 (PESK…APEF), 243-350 (YQSV…APEV), 351-455 (TITS…APAF), 456-565 (AQPE…APAL), and 581-678 (MPRS…APQA). N-linked (GlcNAc...) asparagine glycosylation is found at Asn-257 and Asn-265. An N-linked (GlcNAc...) asparagine glycan is attached at Asn-548. Residues 698-718 (VYLIIAICAVSSLLVLTLLLY) form a helical membrane-spanning segment. At 719–950 (TALRCSAPPT…GNSTTDNSDQ (232 aa)) the chain is on the cytoplasmic side. PXXP repeat units lie at residues 734-737 (PGKP), 774-777 (PSLP), 799-802 (PRQP), 832-835 (PGGP), 873-876 (PGNP), and 891-894 (PGSP). Residues 734 to 894 (PGKPTLVCSS…PDKFIIPGSP (161 aa)) are 6 X 4 AA repeats of P-X-X-P. Disordered stretches follow at residues 774-808 (PSLPPCLGSAEGTGQREEDSEGLKEPRQPNPDWRY) and 827-950 (ILRA…NSDQ). Basic and acidic residues predominate over residues 787–800 (GQREEDSEGLKEPR). A compositionally biased stretch (basic and acidic residues) spans 909 to 923 (DKSDFITFGKKEETK).

Its subcellular location is the cell membrane. Potential calcium-dependent cell-adhesion protein. May be involved in the establishment and maintenance of specific neuronal connections in the brain. In Pan troglodytes (Chimpanzee), this protein is Protocadherin alpha-13 (PCDHA13).